The sequence spans 307 residues: GTPase Era (307 aa).

The 175-residue stretch at arginine 7–lysine 181 folds into the Era-type G domain. Positions glycine 15 to serine 22 are G1. Glycine 15–serine 22 contacts GTP. The interval glutamine 41–asparagine 45 is G2. A G3 region spans residues aspartate 62 to glycine 65. Residues aspartate 62 to leucine 66 and asparagine 130 to aspartate 133 each bind GTP. Residues asparagine 130–aspartate 133 are G4. The G5 stretch occupies residues isoleucine 160–alanine 162. The KH type-2 domain maps to leucine 212 to glutamate 290.

Belongs to the TRAFAC class TrmE-Era-EngA-EngB-Septin-like GTPase superfamily. Era GTPase family. As to quaternary structure, monomer.

It localises to the cytoplasm. Its subcellular location is the cell inner membrane. Functionally, an essential GTPase that binds both GDP and GTP, with rapid nucleotide exchange. Plays a role in 16S rRNA processing and 30S ribosomal subunit biogenesis and possibly also in cell cycle regulation and energy metabolism. The protein is GTPase Era of Desulfovibrio desulfuricans (strain ATCC 27774 / DSM 6949 / MB).